Reading from the N-terminus, the 245-residue chain is DNA polymerase sliding clamp (245 aa).

The protein belongs to the PCNA family. Homotrimer. The subunits circularize to form a toroid; DNA passes through its center. Replication factor C (RFC) is required to load the toroid on the DNA.

Functionally, sliding clamp subunit that acts as a moving platform for DNA processing. Responsible for tethering the catalytic subunit of DNA polymerase and other proteins to DNA during high-speed replication. The chain is DNA polymerase sliding clamp from Picrophilus torridus (strain ATCC 700027 / DSM 9790 / JCM 10055 / NBRC 100828 / KAW 2/3).